Consider the following 247-residue polypeptide: TM2 domain-containing protein 3 (247 aa).

An N-terminal signal peptide occupies residues 1–29 (MAGGVLPLRGLRALCRVLLFLSQFCILSG). Residues 30-179 (GEQSQALAQS…RTFPKMLYCN (150 aa)) are Extracellular-facing. N-linked (GlcNAc...) asparagine glycosylation is found at Asn87, Asn122, Asn140, Asn157, Asn169, and Asn179. Residues 180–200 (WTGGYKWSTALALSITLGGFG) form a helical membrane-spanning segment. Residues 183 to 230 (GYKWSTALALSITLGGFGADRFYLGQWREGLGKLFSFGGLGIWTLIDV) enclose the TM2 domain. The Cytoplasmic portion of the chain corresponds to 201 to 215 (ADRFYLGQWREGLGK). The helical transmembrane segment at 216-236 (LFSFGGLGIWTLIDVLLIGVG) threads the bilayer. Residues 237–247 (YVGPADGSLYI) are Extracellular-facing.

Belongs to the TM2 family. Widely expressed.

Its subcellular location is the membrane. Its function is as follows. Probable positive regulator of Notch signaling. This is TM2 domain-containing protein 3 (TM2D3) from Homo sapiens (Human).